We begin with the raw amino-acid sequence, 166 residues long: Small ribosomal subunit protein uS5 (166 aa).

The S5 DRBM domain occupies 11-74 (LQEKLIAVNR…EQAKRNLNKV (64 aa)).

It belongs to the universal ribosomal protein uS5 family. Part of the 30S ribosomal subunit. Contacts proteins S4 and S8.

Its function is as follows. With S4 and S12 plays an important role in translational accuracy. Located at the back of the 30S subunit body where it stabilizes the conformation of the head with respect to the body. The sequence is that of Small ribosomal subunit protein uS5 from Aeromonas hydrophila subsp. hydrophila (strain ATCC 7966 / DSM 30187 / BCRC 13018 / CCUG 14551 / JCM 1027 / KCTC 2358 / NCIMB 9240 / NCTC 8049).